The sequence spans 251 residues: Imidazole glycerol phosphate synthase subunit HisF (251 aa).

Residues Asp12 and Asp131 contribute to the active site.

It belongs to the HisA/HisF family. Heterodimer of HisH and HisF.

It localises to the cytoplasm. It carries out the reaction 5-[(5-phospho-1-deoxy-D-ribulos-1-ylimino)methylamino]-1-(5-phospho-beta-D-ribosyl)imidazole-4-carboxamide + L-glutamine = D-erythro-1-(imidazol-4-yl)glycerol 3-phosphate + 5-amino-1-(5-phospho-beta-D-ribosyl)imidazole-4-carboxamide + L-glutamate + H(+). It participates in amino-acid biosynthesis; L-histidine biosynthesis; L-histidine from 5-phospho-alpha-D-ribose 1-diphosphate: step 5/9. Functionally, IGPS catalyzes the conversion of PRFAR and glutamine to IGP, AICAR and glutamate. The HisF subunit catalyzes the cyclization activity that produces IGP and AICAR from PRFAR using the ammonia provided by the HisH subunit. The chain is Imidazole glycerol phosphate synthase subunit HisF from Streptomyces avermitilis (strain ATCC 31267 / DSM 46492 / JCM 5070 / NBRC 14893 / NCIMB 12804 / NRRL 8165 / MA-4680).